Reading from the N-terminus, the 306-residue chain is Aspartate carbamoyltransferase catalytic subunit (306 aa).

Positions 56 and 57 each coordinate carbamoyl phosphate. K84 contributes to the L-aspartate binding site. 3 residues coordinate carbamoyl phosphate: R106, H134, and Q137. L-aspartate is bound by residues R167 and R221. G262 and P263 together coordinate carbamoyl phosphate.

This sequence belongs to the aspartate/ornithine carbamoyltransferase superfamily. ATCase family. Heterododecamer (2C3:3R2) of six catalytic PyrB chains organized as two trimers (C3), and six regulatory PyrI chains organized as three dimers (R2).

It catalyses the reaction carbamoyl phosphate + L-aspartate = N-carbamoyl-L-aspartate + phosphate + H(+). The protein operates within pyrimidine metabolism; UMP biosynthesis via de novo pathway; (S)-dihydroorotate from bicarbonate: step 2/3. Catalyzes the condensation of carbamoyl phosphate and aspartate to form carbamoyl aspartate and inorganic phosphate, the committed step in the de novo pyrimidine nucleotide biosynthesis pathway. In Desulforudis audaxviator (strain MP104C), this protein is Aspartate carbamoyltransferase catalytic subunit.